The chain runs to 520 residues: Cysteine--tRNA ligase (520 aa).

Zn(2+) is bound at residue Cys29. The 'HIGH' region signature appears at Pro31–Asn41. Zn(2+) contacts are provided by Cys227, His252, and Glu256. The short motif at Lys301–Ser305 is the 'KMSKS' region element. Lys304 is a binding site for ATP.

Belongs to the class-I aminoacyl-tRNA synthetase family. Monomer. Zn(2+) serves as cofactor.

The protein resides in the cytoplasm. It carries out the reaction tRNA(Cys) + L-cysteine + ATP = L-cysteinyl-tRNA(Cys) + AMP + diphosphate. This is Cysteine--tRNA ligase (cysS) from Treponema pallidum (strain Nichols).